Here is a 449-residue protein sequence, read N- to C-terminus: Streptomycin-6-phosphate phosphatase (449 aa).

Positions 1–32 (MRFAYGRLPWRRGAVLGSALLVLVTAPAASTA) are cleaved as a signal peptide. Asp-50 serves as a coordination point for Mg(2+). Asp-50 is a binding site for Zn(2+). Ser-99 acts as the Phosphoserine intermediate in catalysis. Residues Asp-151 and Thr-153 each coordinate Mg(2+). A disordered region spans residues 268 to 290 (APGGTAPQRCATRNPGRPAGTPD). Glu-321 contributes to the Mg(2+) binding site. Residues Asp-326, His-330, Asp-368, His-369, and His-412 each coordinate Zn(2+).

This sequence belongs to the alkaline phosphatase family. Mg(2+) serves as cofactor. Zn(2+) is required as a cofactor.

It localises to the secreted. The catalysed reaction is streptomycin 6-phosphate + H2O = streptomycin + phosphate. Its pathway is antibiotic biosynthesis; streptomycin biosynthesis. Its function is as follows. Specifically cleaves both streptomycin-6-phosphate and, more slowly, streptomycin-3''-phosphate during the biosynthesis of streptomycin. The sequence is that of Streptomycin-6-phosphate phosphatase (strK) from Streptomyces griseus.